A 172-amino-acid polypeptide reads, in one-letter code: MPRRRSAAPPPRRAAPARSASTAAALPPRTMAPPPAPSRVQQAPPPTAVQGGSSPGFFGNLVSTAAGVGIGSAIGHTVGSVITGGFSGSGSNNAPADTSVPQSSYSNSVPEAAYGSAPPSTFASSAISEEAKNACKGDAKMFADCINEHEFSQCSYYLEQLKACQAMWSNQQ.

2 disordered regions span residues 1-54 and 82-111; these read MPRR…GGSS and ITGGFSGSGSNNAPADTSVPQSSYSNSVPE. Positions 14–29 are enriched in low complexity; the sequence is AAPARSASTAAALPPR. The segment covering 30-47 has biased composition (pro residues); it reads TMAPPPAPSRVQQAPPPT. The span at 89 to 109 shows a compositional bias: polar residues; it reads SGSNNAPADTSVPQSSYSNSV.

This is an uncharacterized protein from Schizosaccharomyces pombe (strain 972 / ATCC 24843) (Fission yeast).